Consider the following 250-residue polypeptide: Triosephosphate isomerase (250 aa).

8–10 (NWK) serves as a coordination point for substrate. Catalysis depends on histidine 93, which acts as the Electrophile. The active-site Proton acceptor is glutamate 165. Residues glycine 171 and serine 211 each coordinate substrate.

Belongs to the triosephosphate isomerase family. As to quaternary structure, homodimer.

The protein resides in the cytoplasm. It carries out the reaction D-glyceraldehyde 3-phosphate = dihydroxyacetone phosphate. Its pathway is carbohydrate biosynthesis; gluconeogenesis. It functions in the pathway carbohydrate degradation; glycolysis; D-glyceraldehyde 3-phosphate from glycerone phosphate: step 1/1. Its function is as follows. Involved in the gluconeogenesis. Catalyzes stereospecifically the conversion of dihydroxyacetone phosphate (DHAP) to D-glyceraldehyde-3-phosphate (G3P). This Malacoplasma penetrans (strain HF-2) (Mycoplasma penetrans) protein is Triosephosphate isomerase.